A 1034-amino-acid chain; its full sequence is Glycine dehydrogenase (decarboxylating) B, mitochondrial (1034 aa).

A mitochondrion-targeting transit peptide spans Met-1 to Thr-63. N6-(pyridoxal phosphate)lysine is present on Lys-770.

Belongs to the GcvP family. In terms of assembly, homodimer. The glycine cleavage system is composed of four proteins: P, T, L and H. Pyridoxal 5'-phosphate is required as a cofactor.

The protein localises to the mitochondrion. It catalyses the reaction N(6)-[(R)-lipoyl]-L-lysyl-[glycine-cleavage complex H protein] + glycine + H(+) = N(6)-[(R)-S(8)-aminomethyldihydrolipoyl]-L-lysyl-[glycine-cleavage complex H protein] + CO2. The glycine cleavage system catalyzes the degradation of glycine. The P protein binds the alpha-amino group of glycine through its pyridoxal phosphate cofactor; CO(2) is released and the remaining methylamine moiety is then transferred to the lipoamide cofactor of the H protein. The chain is Glycine dehydrogenase (decarboxylating) B, mitochondrial (GDCSPB) from Flaveria pringlei.